The chain runs to 354 residues: 3-isopropylmalate dehydrogenase (354 aa).

Residue 76–87 coordinates NAD(+); sequence GPRWDGAKERPE. Positions 94, 104, 130, and 215 each coordinate substrate. Aspartate 215, aspartate 239, and aspartate 243 together coordinate Mg(2+). 273–285 contributes to the NAD(+) binding site; it reads GSAPDIAGKNKAN.

The protein belongs to the isocitrate and isopropylmalate dehydrogenases family. LeuB type 1 subfamily. As to quaternary structure, homodimer. Requires Mg(2+) as cofactor. It depends on Mn(2+) as a cofactor.

The protein localises to the cytoplasm. It catalyses the reaction (2R,3S)-3-isopropylmalate + NAD(+) = 4-methyl-2-oxopentanoate + CO2 + NADH. It participates in amino-acid biosynthesis; L-leucine biosynthesis; L-leucine from 3-methyl-2-oxobutanoate: step 3/4. Catalyzes the oxidation of 3-carboxy-2-hydroxy-4-methylpentanoate (3-isopropylmalate) to 3-carboxy-4-methyl-2-oxopentanoate. The product decarboxylates to 4-methyl-2 oxopentanoate. The polypeptide is 3-isopropylmalate dehydrogenase (Bacillus anthracis).